Reading from the N-terminus, the 72-residue chain is Translation initiation factor IF-1 (72 aa).

The region spanning 1 to 72 (MSKEDAIEVM…TRGRIVYRYK (72 aa)) is the S1-like domain.

The protein belongs to the IF-1 family. In terms of assembly, component of the 30S ribosomal translation pre-initiation complex which assembles on the 30S ribosome in the order IF-2 and IF-3, IF-1 and N-formylmethionyl-tRNA(fMet); mRNA recruitment can occur at any time during PIC assembly.

The protein resides in the cytoplasm. In terms of biological role, one of the essential components for the initiation of protein synthesis. Stabilizes the binding of IF-2 and IF-3 on the 30S subunit to which N-formylmethionyl-tRNA(fMet) subsequently binds. Helps modulate mRNA selection, yielding the 30S pre-initiation complex (PIC). Upon addition of the 50S ribosomal subunit IF-1, IF-2 and IF-3 are released leaving the mature 70S translation initiation complex. The sequence is that of Translation initiation factor IF-1 from Koribacter versatilis (strain Ellin345).